A 186-amino-acid polypeptide reads, in one-letter code: Inner membrane-spanning protein YciB (186 aa).

5 helical membrane-spanning segments follow: residues 10–30 (IILFFAAFKVWGIYVATAVAI), 47–67 (VEPLQWLSLGVIVLFGGATLL), 76–96 (WKPTVLYWLMGGTLLVGQLVF), 121–141 (WGWTGFFATMGVLNLWVAYNF), and 149–169 (FKLFGGIGLMFAFVIAQALYL).

It belongs to the YciB family.

Its subcellular location is the cell inner membrane. Its function is as follows. Plays a role in cell envelope biogenesis, maintenance of cell envelope integrity and membrane homeostasis. This Acidovorax sp. (strain JS42) protein is Inner membrane-spanning protein YciB.